A 1483-amino-acid polypeptide reads, in one-letter code: Rho GTPase-activating protein 23 (1483 aa).

Positions 15 to 34 (PEPRPPQLPLGPRDGCSSGR) are disordered. One can recognise a PDZ domain in the interval 71–155 (HCILKEEENG…TLELSIMPKD (85 aa)). 2 disordered regions span residues 212–276 (ISAL…PGSR) and 300–345 (AGER…GQEG). Basic and acidic residues predominate over residues 316–325 (SQDRLEDVTT). The span at 331-342 (CSTSQDALSQLG) shows a compositional bias: polar residues. A phosphoserine mark is found at serine 361 and serine 372. Positions 385–407 (PSARTSACPSRDLTQAPPPSGLQ) are disordered. Serine 421 bears the Phosphoserine mark. Disordered regions lie at residues 448–485 (SLAQSPASFPPEASEPPRVVRPDPSTRALEPPAEDHRD) and 508–527 (NLGFGDESPEPEARGERLGR). Phosphoserine occurs at positions 515, 579, 607, and 619. The residue at position 652 (threonine 652) is a Phosphothreonine. Residues serine 655, serine 658, and serine 673 each carry the phosphoserine modification. A PH domain is found at 684 to 804 (DIRREGWLYY…WIRAIRENSR (121 aa)). The disordered stretch occupies residues 827 to 848 (KVSHSSGPKADSSPKGSRGLGG). A Glycyl lysine isopeptide (Lys-Gly) (interchain with G-Cter in SUMO2) cross-link involves residue lysine 850. Disordered regions lie at residues 860–879 (RGLRTQEQPPGSKEDSVAAP), 1093–1150 (FSDD…SWVP), 1171–1361 (KRKK…GSRP), and 1419–1469 (ELGG…LQGL). Residues 901 to 1093 (IRLEECQPAT…TLIQHSDWFF (193 aa)) enclose the Rho-GAP domain. Positions 1099–1110 (KGERTPVDDKEP) are enriched in basic and acidic residues. Composition is skewed to polar residues over residues 1133–1144 (GSDSTTCSSAKS) and 1236–1248 (SIVSGYSTLSTMD). Residues 1338–1351 (GSASSSSQESLRPP) are compositionally biased toward low complexity. Over residues 1440-1457 (SGLSSLESTKARASSAAS) the composition is skewed to polar residues.

GTPase activator for the Rho-type GTPases by converting them to an inactive GDP-bound state. The polypeptide is Rho GTPase-activating protein 23 (Arhgap23) (Mus musculus (Mouse)).